A 342-amino-acid chain; its full sequence is Tetraacyldisaccharide 4'-kinase (342 aa).

68 to 75 contributes to the ATP binding site; it reads TVGGTGKT.

The protein belongs to the LpxK family.

It catalyses the reaction a lipid A disaccharide + ATP = a lipid IVA + ADP + H(+). Its pathway is glycolipid biosynthesis; lipid IV(A) biosynthesis; lipid IV(A) from (3R)-3-hydroxytetradecanoyl-[acyl-carrier-protein] and UDP-N-acetyl-alpha-D-glucosamine: step 6/6. Functionally, transfers the gamma-phosphate of ATP to the 4'-position of a tetraacyldisaccharide 1-phosphate intermediate (termed DS-1-P) to form tetraacyldisaccharide 1,4'-bis-phosphate (lipid IVA). The polypeptide is Tetraacyldisaccharide 4'-kinase (Burkholderia ambifaria (strain MC40-6)).